The chain runs to 168 residues: Large ribosomal subunit protein uL10 (168 aa).

Belongs to the universal ribosomal protein uL10 family. Part of the ribosomal stalk of the 50S ribosomal subunit. The N-terminus interacts with L11 and the large rRNA to form the base of the stalk. The C-terminus forms an elongated spine to which L12 dimers bind in a sequential fashion forming a multimeric L10(L12)X complex.

In terms of biological role, forms part of the ribosomal stalk, playing a central role in the interaction of the ribosome with GTP-bound translation factors. The sequence is that of Large ribosomal subunit protein uL10 from Pediococcus pentosaceus (strain ATCC 25745 / CCUG 21536 / LMG 10740 / 183-1w).